The sequence spans 536 residues: Lysosomal acid glucosylceramidase (536 aa).

An N-terminal signal peptide occupies residues 1–39 (MEFSSPSREECPKPSGRVSIMAGSLTGLLLLQAVSWASG). 2 disulfide bridges follow: Cys-43–Cys-55 and Cys-57–Cys-62. N-linked (GlcNAc...) asparagine glycosylation is found at Asn-58, Asn-98, and Asn-185. Catalysis depends on Glu-274, which acts as the Proton donor. An N-linked (GlcNAc...) asparagine glycan is attached at Asn-309. Residue Glu-379 is the Nucleophile of the active site. A glycan (N-linked (GlcNAc...) asparagine) is linked at Asn-501.

Belongs to the glycosyl hydrolase 30 family. In terms of assembly, interacts with saposin-C. Interacts with SCARB2. Interacts with TCP1. Interacts with GRN; this interaction prevents aggregation of GBA1-SCARB2 complex via interaction with HSPA1A upon stress.

Its subcellular location is the lysosome membrane. The catalysed reaction is a beta-D-glucosyl-(1&lt;-&gt;1')-N-acylsphing-4-enine + H2O = an N-acylsphing-4-enine + D-glucose. The enzyme catalyses a beta-D-galactosyl-(1&lt;-&gt;1')-N-acylsphing-4-enine + H2O = an N-acylsphing-4-enine + D-galactose. It carries out the reaction cholesteryl 3-beta-D-glucoside + H2O = cholesterol + D-glucose. It catalyses the reaction a beta-D-glucosyl-(1&lt;-&gt;1')-N-acylsphing-4-enine + cholesterol = cholesteryl 3-beta-D-glucoside + an N-acylsphing-4-enine. The catalysed reaction is beta-D-glucosyl-N-(9Z-octadecenoyl)-sphing-4E-enine + cholesterol = N-(9Z-octadecenoyl)-sphing-4-enine + cholesteryl 3-beta-D-glucoside. The enzyme catalyses beta-D-glucosyl-N-octanoylsphing-4E-enine + cholesterol = N-octanoylsphing-4-enine + cholesteryl 3-beta-D-glucoside. It carries out the reaction beta-D-glucosyl-N-dodecanoylsphing-4-enine + cholesterol = N-dodecanoylsphing-4-enine + cholesteryl 3-beta-D-glucoside. It catalyses the reaction beta-D-glucosyl-(1&lt;-&gt;1)-N-octadecanoylsphing-4-enine + cholesterol = N-octadecanoylsphing-4-enine + cholesteryl 3-beta-D-glucoside. The catalysed reaction is beta-D-glucosyl-(1&lt;-&gt;1')-N-(15Z-tetracosenoyl)-sphing-4-enine + cholesterol = N-(15Z-tetracosenoyl)-sphing-4-enine + cholesteryl 3-beta-D-glucoside. The enzyme catalyses a beta-D-galactosyl-(1&lt;-&gt;1')-N-acylsphing-4-enine + cholesterol = cholesteryl 3-beta-D-galactoside + an N-acylsphing-4-enine. It carries out the reaction 1-(beta-D-galactosyl)-N-dodecanoylsphing-4-enine + cholesterol = cholesteryl 3-beta-D-galactoside + N-dodecanoylsphing-4-enine. It catalyses the reaction a beta-D-xylosyl-(1&lt;-&gt;1')-N-acylsphing-4-enine + cholesterol = cholesteryl 3-beta-D-xyloside + an N-acylsphing-4-enine. The catalysed reaction is beta-D-xylosyl-(1&lt;-&gt;1')-N-(9Z-octadecenoyl)-sphing-4-enine + cholesterol = cholesteryl 3-beta-D-xyloside + N-(9Z-octadecenoyl)-sphing-4-enine. Its pathway is steroid metabolism; cholesterol metabolism. It functions in the pathway sphingolipid metabolism. Its function is as follows. Glucosylceramidase that catalyzes, within the lysosomal compartment, the hydrolysis of glucosylceramides/GlcCers (such as beta-D-glucosyl-(1&lt;-&gt;1')-N-acylsphing-4-enine) into free ceramides (such as N-acylsphing-4-enine) and glucose. Plays a central role in the degradation of complex lipids and the turnover of cellular membranes. Through the production of ceramides, participates in the PKC-activated salvage pathway of ceramide formation. Catalyzes the glucosylation of cholesterol, through a transglucosylation reaction where glucose is transferred from GlcCer to cholesterol. GlcCer containing mono-unsaturated fatty acids (such as beta-D-glucosyl-N-(9Z-octadecenoyl)-sphing-4-enine) are preferred as glucose donors for cholesterol glucosylation when compared with GlcCer containing same chain length of saturated fatty acids (such as beta-D-glucosyl-N-octadecanoyl-sphing-4-enine). Under specific conditions, may alternatively catalyze the reverse reaction, transferring glucose from cholesteryl 3-beta-D-glucoside to ceramide. Can also hydrolyze cholesteryl 3-beta-D-glucoside producing glucose and cholesterol. Catalyzes the hydrolysis of galactosylceramides/GalCers (such as beta-D-galactosyl-(1&lt;-&gt;1')-N-acylsphing-4-enine), as well as the transfer of galactose between GalCers and cholesterol in vitro, but with lower activity than with GlcCers. Contrary to GlcCer and GalCer, xylosylceramide/XylCer (such as beta-D-xyosyl-(1&lt;-&gt;1')-N-acylsphing-4-enine) is not a good substrate for hydrolysis, however it is a good xylose donor for transxylosylation activity to form cholesteryl 3-beta-D-xyloside. The protein is Lysosomal acid glucosylceramidase (GBA1) of Pan troglodytes (Chimpanzee).